An 864-amino-acid polypeptide reads, in one-letter code: Disintegrin and metalloproteinase domain-containing protein 15 (864 aa).

An N-terminal signal peptide occupies residues 1–17 (MRLALLWALGLLGAGSP). The disordered stretch occupies residues 18 to 45 (RPSPPLPNIGGTEEEQQASPERTLSGSM). Residues 18–207 (RPSPPLPNIG…EQHHAHRLKR (190 aa)) constitute a propeptide that is removed on maturation. The segment covering 34–45 (QASPERTLSGSM) has biased composition (polar residues). The Cysteine switch signature appears at 177–184 (HTCAPSWH). Cys-179 contributes to the Zn(2+) binding site. The Extracellular segment spans residues 208 to 696 (DVVTETKIVE…TQLKATSSLT (489 aa)). The 202-residue stretch at 214-415 (KIVELVIVAD…GMGSCLFERQ (202 aa)) folds into the Peptidase M12B domain. Residue Asn-238 is glycosylated (N-linked (GlcNAc...) asparagine). 4 disulfides stabilise this stretch: Cys-324-Cys-410, Cys-366-Cys-394, Cys-368-Cys-377, and Cys-481-Cys-501. His-349 contacts Zn(2+). Glu-350 is a catalytic residue. His-353 and His-359 together coordinate Zn(2+). Asn-390 and Asn-393 each carry an N-linked (GlcNAc...) asparagine glycan. The Disintegrin domain maps to 422 to 509 (SSLCGNMFVD…QCPSDIRLGD (88 aa)). Residues Asn-607 and Asn-612 are each glycosylated (N-linked (GlcNAc...) asparagine). 3 cysteine pairs are disulfide-bonded: Cys-658-Cys-668, Cys-662-Cys-674, and Cys-676-Cys-685. The region spanning 658 to 686 (CRRKCHGHGVCDSSGHCRCEEGWAPPDCM) is the EGF-like domain. The helical transmembrane segment at 697 to 717 (TGLLLSLLLLLVLVLLGASYW) threads the bilayer. A phosphotyrosine; by HCK and LCK mark is found at Tyr-716 and Tyr-736. Residues 718–864 (HRARLHQRLC…PPPAASSLYL (147 aa)) are Cytoplasmic-facing. The tract at residues 736-864 (YRAPQSCPPE…PPPAASSLYL (129 aa)) is disordered. A compositionally biased stretch (pro residues) spans 741 to 750 (SCPPERPGPP). Residues 752–762 (RAQQMTGTKQA) show a composition bias toward polar residues. Composition is skewed to pro residues over residues 768–780 (PVPPSRPLPPNPV) and 814–825 (TKPPPPRKPLPA). 2 consecutive short sequence motifs (SH3-binding) follow at residues 816–822 (PPPPRKP) and 851–857 (RPAPPPP).

As to quaternary structure, interacts specifically with Src family protein-tyrosine kinases (PTKs). Interacts with ITAGV-ITGB3 (vitronectin receptor). Interacts with SH3GL2 and SNX9; this interaction occurs preferentially with ADAM15 precursor, rather than the processed form, suggesting it occurs in a secretory pathway compartment prior to the medial Golgi. Interacts with ITAG9-ITGB1. Interacts with SH3PXD2A. Interacts with ITAGV-ITGB1. Interacts with GRB2, HCK, ITSN1, ITSN2, LYN, MAPK1, MAPK3, NCF1, NCK1, nephrocystin, PTK6, SNX33, LCK and SRC. Requires Zn(2+) as cofactor. Post-translationally, the precursor is cleaved by a furin endopeptidase. An additional membrane proximal site of cleavage affects a small percentage of the proteins and results in disulfide-linked fragments. The prodomain is apparently cleaved in several positions that are N-terminal of the furin cleavage site. In terms of processing, may be partially sialylated. Phosphorylation increases association with PTKs. As to expression, expressed moderately in pericytes of retina. Expressed in testis and in spermatozoa from the caput, corpus, and cauda epididymis, as well as in non-capacitated and acrosome-reacted sperm (at protein level). Highly expressed in heart, brain, lung, and kidney. Expressed at lower levels in spleen, liver, testis and muscle.

The protein resides in the endomembrane system. It localises to the cell junction. Its subcellular location is the adherens junction. It is found in the cell projection. The protein localises to the cilium. The protein resides in the flagellum. It localises to the cytoplasmic vesicle. Its subcellular location is the secretory vesicle. It is found in the acrosome. In terms of biological role, active metalloproteinase with gelatinolytic and collagenolytic activity. Plays a role in the wound healing process. Mediates both heterotypic intraepithelial cell/T-cell interactions and homotypic T-cell aggregation. Inhibits beta-1 integrin-mediated cell adhesion and migration of airway smooth muscle cells. Suppresses cell motility on or towards fibronectin possibly by driving alpha-v/beta-1 integrin (ITAGV-ITGB1) cell surface expression via ERK1/2 inactivation. Cleaves E-cadherin in response to growth factor deprivation. Plays a role in glomerular cell migration. Plays a role in pathological neovascularization. May play a role in cartilage remodeling. May be proteolytically processed, during sperm epididymal maturation and the acrosome reaction. May play a role in sperm-egg binding through its disintegrin domain. Interactions with egg membrane could be mediated via binding between the disintegrin-like domain to one or more integrin receptors on the egg. This chain is Disintegrin and metalloproteinase domain-containing protein 15 (Adam15), found in Mus musculus (Mouse).